A 116-amino-acid polypeptide reads, in one-letter code: MKTIIVFLSLLVLATKFGDANEGVNQEQMKEVIQNEFREDFLNEMAAMSLLQQLEAIESTLLEKEADRNSRQKRCNGENVPCGPNHSTCCSGLSCEETFGYGWWYDTPFCVKPSKG.

Positions 1-20 are cleaved as a signal peptide; the sequence is MKTIIVFLSLLVLATKFGDA. Positions 21–74 are excised as a propeptide; the sequence is NEGVNQEQMKEVIQNEFREDFLNEMAAMSLLQQLEAIESTLLEKEADRNSRQKR. Intrachain disulfides connect cysteine 75/cysteine 90, cysteine 82/cysteine 95, and cysteine 89/cysteine 110. Asparagine 85 carries N-linked (GlcNAc...) asparagine glycosylation.

It belongs to the neurotoxin 14 (magi-1) family. 06 (ICK-Trit) subfamily. As to expression, expressed by the venom gland.

Its subcellular location is the secreted. Ion channel inhibitor. This is U16-barytoxin-Tl1f from Trittame loki (Brush-footed trapdoor spider).